The following is a 522-amino-acid chain: Putative aldehyde dehydrogenase-like protein C21C3 (522 aa).

The Proton acceptor role is filled by E239. The Nucleophile role is filled by C273.

This sequence belongs to the aldehyde dehydrogenase family.

The protein localises to the cytoplasm. It is found in the nucleus. The chain is Putative aldehyde dehydrogenase-like protein C21C3 from Schizosaccharomyces pombe (strain 972 / ATCC 24843) (Fission yeast).